The primary structure comprises 102 residues: MMNTKKLMKMAKKWQQRAALRRKRISFQRSNSTTSSSSAVEKGCFVVYTADQVRFAFPISYLSNSVIQELLKISEEEFGIPTEGPITLPFDSIRFSWSISSN.

This sequence belongs to the ARG7 family.

The protein localises to the cell membrane. In terms of biological role, may promote auxin-stimulated organ elongation, such as hypocotyls, stamen filaments and petals. The polypeptide is Auxin-responsive protein SAUR68 (Arabidopsis thaliana (Mouse-ear cress)).